The primary structure comprises 102 residues: Large ribosomal subunit protein uL23 (102 aa).

This sequence belongs to the universal ribosomal protein uL23 family. Part of the 50S ribosomal subunit. Contacts protein L29, and trigger factor when it is bound to the ribosome.

Its function is as follows. One of the early assembly proteins it binds 23S rRNA. One of the proteins that surrounds the polypeptide exit tunnel on the outside of the ribosome. Forms the main docking site for trigger factor binding to the ribosome. The chain is Large ribosomal subunit protein uL23 from Cutibacterium acnes (strain DSM 16379 / KPA171202) (Propionibacterium acnes).